Consider the following 114-residue polypeptide: Iron-sulfur cluster insertion protein ErpA (114 aa).

Iron-sulfur cluster contacts are provided by Cys42, Cys106, and Cys108.

Belongs to the HesB/IscA family. As to quaternary structure, homodimer. Requires iron-sulfur cluster as cofactor.

Its function is as follows. Required for insertion of 4Fe-4S clusters for at least IspG. This is Iron-sulfur cluster insertion protein ErpA from Klebsiella pneumoniae (strain 342).